Here is a 256-residue protein sequence, read N- to C-terminus: Triosephosphate isomerase (256 aa).

9–11 (NWK) is a binding site for substrate. The active-site Electrophile is the His-97. Catalysis depends on Glu-169, which acts as the Proton acceptor. Substrate-binding positions include Gly-175, Ser-214, and 235 to 236 (GG).

This sequence belongs to the triosephosphate isomerase family. As to quaternary structure, homodimer.

Its subcellular location is the cytoplasm. The catalysed reaction is D-glyceraldehyde 3-phosphate = dihydroxyacetone phosphate. The protein operates within carbohydrate biosynthesis; gluconeogenesis. Its pathway is carbohydrate degradation; glycolysis; D-glyceraldehyde 3-phosphate from glycerone phosphate: step 1/1. Functionally, involved in the gluconeogenesis. Catalyzes stereospecifically the conversion of dihydroxyacetone phosphate (DHAP) to D-glyceraldehyde-3-phosphate (G3P). The protein is Triosephosphate isomerase of Aliivibrio fischeri (strain ATCC 700601 / ES114) (Vibrio fischeri).